A 182-amino-acid polypeptide reads, in one-letter code: Large ribosomal subunit protein uL5 (182 aa).

It belongs to the universal ribosomal protein uL5 family. As to quaternary structure, part of the 50S ribosomal subunit; part of the 5S rRNA/L5/L18/L25 subcomplex. Contacts the 5S rRNA and the P site tRNA. Forms a bridge to the 30S subunit in the 70S ribosome.

Functionally, this is one of the proteins that bind and probably mediate the attachment of the 5S RNA into the large ribosomal subunit, where it forms part of the central protuberance. In the 70S ribosome it contacts protein S13 of the 30S subunit (bridge B1b), connecting the 2 subunits; this bridge is implicated in subunit movement. Contacts the P site tRNA; the 5S rRNA and some of its associated proteins might help stabilize positioning of ribosome-bound tRNAs. The sequence is that of Large ribosomal subunit protein uL5 from Borrelia turicatae (strain 91E135).